A 591-amino-acid chain; its full sequence is ATP-dependent lipid A-core flippase (591 aa).

5 helical membrane-spanning segments follow: residues 34–54 (LILAVLLMAGAAATQPTLAVI), 71–91 (IWSVPLAVIGLILLRGVCNFF), 158–178 (LVVISLIAVLLYMSWLLTVII), 258–278 (LTPLTQVCIAVAVGAVIAVAL), and 285–305 (TLTAGAFAAFMSALAQIFDPI). An ABC transmembrane type-1 domain is found at 35–317 (ILAVLLMAGA…LTNLASKMQK (283 aa)). The ABC transporter domain occupies 350–586 (IEFRQIGHRF…GGLYATLYNM (237 aa)). Residue 384–391 (GRSGSGKT) coordinates ATP.

It belongs to the ABC transporter superfamily. Lipid exporter (TC 3.A.1.106) family. As to quaternary structure, homodimer.

It is found in the cell inner membrane. It carries out the reaction ATP + H2O + lipid A-core oligosaccharideSide 1 = ADP + phosphate + lipid A-core oligosaccharideSide 2.. In terms of biological role, involved in lipopolysaccharide (LPS) biosynthesis. Translocates lipid A-core from the inner to the outer leaflet of the inner membrane. Transmembrane domains (TMD) form a pore in the inner membrane and the ATP-binding domain (NBD) is responsible for energy generation. This Bordetella avium (strain 197N) protein is ATP-dependent lipid A-core flippase.